A 454-amino-acid polypeptide reads, in one-letter code: tRNA modification GTPase MnmE (454 aa).

(6S)-5-formyl-5,6,7,8-tetrahydrofolate-binding residues include Arg-23, Glu-80, and Lys-120. The 162-residue stretch at 216-377 folds into the TrmE-type G domain; that stretch reads GMKVVIAGRP…LREHLKQSMG (162 aa). Residue Asn-226 participates in K(+) binding. Residues 226–231, 245–251, and 270–273 each bind GTP; these read NAGKSS, TDIAGTT, and DTAG. Ser-230 contributes to the Mg(2+) binding site. 3 residues coordinate K(+): Thr-245, Ile-247, and Thr-250. Thr-251 provides a ligand contact to Mg(2+). Lys-454 serves as a coordination point for (6S)-5-formyl-5,6,7,8-tetrahydrofolate.

Belongs to the TRAFAC class TrmE-Era-EngA-EngB-Septin-like GTPase superfamily. TrmE GTPase family. Homodimer. Heterotetramer of two MnmE and two MnmG subunits. Requires K(+) as cofactor.

The protein resides in the cytoplasm. Exhibits a very high intrinsic GTPase hydrolysis rate. Involved in the addition of a carboxymethylaminomethyl (cmnm) group at the wobble position (U34) of certain tRNAs, forming tRNA-cmnm(5)s(2)U34. This chain is tRNA modification GTPase MnmE, found in Mannheimia succiniciproducens (strain KCTC 0769BP / MBEL55E).